A 438-amino-acid polypeptide reads, in one-letter code: Probable tRNA pseudouridine synthase D (438 aa).

Asp86 serves as the catalytic Nucleophile. A TRUD domain is found at 165 to 390 (GVPNFFGIQR…SKGTRREVLL (226 aa)).

The protein belongs to the pseudouridine synthase TruD family.

It catalyses the reaction uridine(13) in tRNA = pseudouridine(13) in tRNA. Its function is as follows. Could be responsible for synthesis of pseudouridine from uracil-13 in transfer RNAs. The chain is Probable tRNA pseudouridine synthase D from Methanosarcina mazei (strain ATCC BAA-159 / DSM 3647 / Goe1 / Go1 / JCM 11833 / OCM 88) (Methanosarcina frisia).